Here is a 309-residue protein sequence, read N- to C-terminus: tRNA uridine(34) hydroxylase (309 aa).

In terms of domain architecture, Rhodanese spans 130-225; sequence RGEEVVFFDG…YGEKYGNDGL (96 aa). Cysteine 185 functions as the Cysteine persulfide intermediate in the catalytic mechanism.

It belongs to the TrhO family.

The catalysed reaction is uridine(34) in tRNA + AH2 + O2 = 5-hydroxyuridine(34) in tRNA + A + H2O. In terms of biological role, catalyzes oxygen-dependent 5-hydroxyuridine (ho5U) modification at position 34 in tRNAs. This Corynebacterium aurimucosum (strain ATCC 700975 / DSM 44827 / CIP 107346 / CN-1) (Corynebacterium nigricans) protein is tRNA uridine(34) hydroxylase.